The following is a 762-amino-acid chain: 5-methyltetrahydropteroyltriglutamate--homocysteine methyltransferase (762 aa).

5-methyltetrahydropteroyltri-L-glutamate contacts are provided by residues 18-21 (REWK) and lysine 112. L-homocysteine-binding positions include 435 to 437 (IGS) and glutamate 488. Residues 435–437 (IGS) and glutamate 488 each bind L-methionine. 5-methyltetrahydropteroyltri-L-glutamate contacts are provided by residues 519-520 (RC) and tryptophan 565. An L-homocysteine-binding site is contributed by aspartate 603. Aspartate 603 is a binding site for L-methionine. Residue glutamate 609 participates in 5-methyltetrahydropteroyltri-L-glutamate binding. Zn(2+)-binding residues include histidine 645, cysteine 647, and glutamate 669. Histidine 698 serves as the catalytic Proton donor. Cysteine 719 bears the S-bacillithiol cysteine disulfide mark. Residue cysteine 730 participates in Zn(2+) binding.

This sequence belongs to the vitamin-B12 independent methionine synthase family. Requires Zn(2+) as cofactor. Post-translationally, in response to oxidative stress, Cys-719 can react with bacillithiol (BSH) to form mixed disulfides. S-bacillithiolation leads to loss of catalytic activity and methionine auxotrophy.

It catalyses the reaction 5-methyltetrahydropteroyltri-L-glutamate + L-homocysteine = tetrahydropteroyltri-L-glutamate + L-methionine. It participates in amino-acid biosynthesis; L-methionine biosynthesis via de novo pathway; L-methionine from L-homocysteine (MetE route): step 1/1. Catalyzes the transfer of a methyl group from 5-methyltetrahydrofolate to homocysteine resulting in methionine formation. The chain is 5-methyltetrahydropteroyltriglutamate--homocysteine methyltransferase from Bacillus subtilis (strain 168).